A 123-amino-acid chain; its full sequence is Small ribosomal subunit protein uS12 (123 aa).

The residue at position 89 (D89) is a 3-methylthioaspartic acid.

The protein belongs to the universal ribosomal protein uS12 family. Part of the 30S ribosomal subunit. Contacts proteins S8 and S17. May interact with IF1 in the 30S initiation complex.

In terms of biological role, with S4 and S5 plays an important role in translational accuracy. Its function is as follows. Interacts with and stabilizes bases of the 16S rRNA that are involved in tRNA selection in the A site and with the mRNA backbone. Located at the interface of the 30S and 50S subunits, it traverses the body of the 30S subunit contacting proteins on the other side and probably holding the rRNA structure together. The combined cluster of proteins S8, S12 and S17 appears to hold together the shoulder and platform of the 30S subunit. In Methylobacterium nodulans (strain LMG 21967 / CNCM I-2342 / ORS 2060), this protein is Small ribosomal subunit protein uS12.